The chain runs to 99 residues: NADH-quinone oxidoreductase subunit K (99 aa).

Transmembrane regions (helical) follow at residues 2-22, 28-48, and 60-80; these read PVEY…LGVL, LILM…FLAF, and IAFF…AVVI.

It belongs to the complex I subunit 4L family. As to quaternary structure, NDH-1 is composed of 14 different subunits. Subunits NuoA, H, J, K, L, M, N constitute the membrane sector of the complex.

It is found in the cell inner membrane. The enzyme catalyses a quinone + NADH + 5 H(+)(in) = a quinol + NAD(+) + 4 H(+)(out). In terms of biological role, NDH-1 shuttles electrons from NADH, via FMN and iron-sulfur (Fe-S) centers, to quinones in the respiratory chain. The immediate electron acceptor for the enzyme in this species is believed to be ubiquinone. Couples the redox reaction to proton translocation (for every two electrons transferred, four hydrogen ions are translocated across the cytoplasmic membrane), and thus conserves the redox energy in a proton gradient. The polypeptide is NADH-quinone oxidoreductase subunit K (Anaeromyxobacter dehalogenans (strain 2CP-C)).